A 185-amino-acid chain; its full sequence is Elongation factor P (185 aa).

Belongs to the elongation factor P family.

It is found in the cytoplasm. The protein operates within protein biosynthesis; polypeptide chain elongation. In terms of biological role, involved in peptide bond synthesis. Stimulates efficient translation and peptide-bond synthesis on native or reconstituted 70S ribosomes in vitro. Probably functions indirectly by altering the affinity of the ribosome for aminoacyl-tRNA, thus increasing their reactivity as acceptors for peptidyl transferase. The chain is Elongation factor P from Herpetosiphon aurantiacus (strain ATCC 23779 / DSM 785 / 114-95).